A 546-amino-acid chain; its full sequence is 2-succinyl-5-enolpyruvyl-6-hydroxy-3-cyclohexene-1-carboxylate synthase (546 aa).

It belongs to the TPP enzyme family. MenD subfamily. As to quaternary structure, homodimer. It depends on Mg(2+) as a cofactor. Mn(2+) serves as cofactor. Requires thiamine diphosphate as cofactor.

The enzyme catalyses isochorismate + 2-oxoglutarate + H(+) = 5-enolpyruvoyl-6-hydroxy-2-succinyl-cyclohex-3-ene-1-carboxylate + CO2. The protein operates within quinol/quinone metabolism; 1,4-dihydroxy-2-naphthoate biosynthesis; 1,4-dihydroxy-2-naphthoate from chorismate: step 2/7. Its pathway is quinol/quinone metabolism; menaquinone biosynthesis. In terms of biological role, catalyzes the thiamine diphosphate-dependent decarboxylation of 2-oxoglutarate and the subsequent addition of the resulting succinic semialdehyde-thiamine pyrophosphate anion to isochorismate to yield 2-succinyl-5-enolpyruvyl-6-hydroxy-3-cyclohexene-1-carboxylate (SEPHCHC). The polypeptide is 2-succinyl-5-enolpyruvyl-6-hydroxy-3-cyclohexene-1-carboxylate synthase (Mycolicibacterium smegmatis (strain ATCC 700084 / mc(2)155) (Mycobacterium smegmatis)).